The chain runs to 285 residues: Flagellar filament core protein flaB2 (285 aa).

It belongs to the bacterial flagellin family. As to quaternary structure, the flagellum consists of an outer layer composed of two sheath proteins, flaA1 (44 kDa) and flaA2 (35 kDa) around a core that contains three proteins flaB1 (37 kDa), flaB2 (34 kDa) and flaB3 (32 kDa).

Its subcellular location is the periplasmic flagellum. It localises to the periplasm. In terms of biological role, component of the core of the flagella. The polypeptide is Flagellar filament core protein flaB2 (flaB2) (Brachyspira hyodysenteriae (Treponema hyodysenteriae)).